Reading from the N-terminus, the 196-residue chain is Holliday junction branch migration complex subunit RuvA (196 aa).

Residues 1-63 form a domain I region; that stretch reads MYDYIKGTLV…DDAHLLFGFH (63 aa). The segment at 64–142 is domain II; that stretch reads TEDEKEVFLK…ELPAETTNTT (79 aa). The tract at residues 143 to 146 is flexible linker; that stretch reads ANQT. Residues 147–196 are domain III; sequence AGNQQLDEAMEALLALGYKATELKKVKAFFEDTNETAEQYIKSALKMLMK.

This sequence belongs to the RuvA family. As to quaternary structure, homotetramer. Forms an RuvA(8)-RuvB(12)-Holliday junction (HJ) complex. HJ DNA is sandwiched between 2 RuvA tetramers; dsDNA enters through RuvA and exits via RuvB. An RuvB hexamer assembles on each DNA strand where it exits the tetramer. Each RuvB hexamer is contacted by two RuvA subunits (via domain III) on 2 adjacent RuvB subunits; this complex drives branch migration. In the full resolvosome a probable DNA-RuvA(4)-RuvB(12)-RuvC(2) complex forms which resolves the HJ.

Its subcellular location is the cytoplasm. Functionally, the RuvA-RuvB-RuvC complex processes Holliday junction (HJ) DNA during genetic recombination and DNA repair, while the RuvA-RuvB complex plays an important role in the rescue of blocked DNA replication forks via replication fork reversal (RFR). RuvA specifically binds to HJ cruciform DNA, conferring on it an open structure. The RuvB hexamer acts as an ATP-dependent pump, pulling dsDNA into and through the RuvAB complex. HJ branch migration allows RuvC to scan DNA until it finds its consensus sequence, where it cleaves and resolves the cruciform DNA. This chain is Holliday junction branch migration complex subunit RuvA, found in Streptococcus thermophilus (strain ATCC BAA-491 / LMD-9).